A 350-amino-acid polypeptide reads, in one-letter code: S-adenosylmethionine:tRNA ribosyltransferase-isomerase (350 aa).

Belongs to the QueA family. Monomer.

Its subcellular location is the cytoplasm. The enzyme catalyses 7-aminomethyl-7-carbaguanosine(34) in tRNA + S-adenosyl-L-methionine = epoxyqueuosine(34) in tRNA + adenine + L-methionine + 2 H(+). It participates in tRNA modification; tRNA-queuosine biosynthesis. Transfers and isomerizes the ribose moiety from AdoMet to the 7-aminomethyl group of 7-deazaguanine (preQ1-tRNA) to give epoxyqueuosine (oQ-tRNA). This Aliivibrio fischeri (strain MJ11) (Vibrio fischeri) protein is S-adenosylmethionine:tRNA ribosyltransferase-isomerase.